A 141-amino-acid chain; its full sequence is Hemoglobin subunit alpha (141 aa).

A Globin domain is found at 1–141 (VLSAADKAHV…VSTVLTSKYR (141 aa)). The residue at position 3 (Ser3) is a Phosphoserine. 2 positions are modified to N6-succinyllysine: Lys7 and Lys11. Lys16 is modified (N6-acetyllysine; alternate). An N6-succinyllysine; alternate modification is found at Lys16. Tyr24 is subject to Phosphotyrosine. Residue Ser35 is modified to Phosphoserine. The residue at position 40 (Lys40) is an N6-succinyllysine. At Ser49 the chain carries Phosphoserine. His58 lines the O2 pocket. Position 87 (His87) interacts with heme b. Thr108 bears the Phosphothreonine mark. Ser124 is modified (phosphoserine). Residues Thr134 and Thr137 each carry the phosphothreonine modification. Ser138 carries the post-translational modification Phosphoserine.

The protein belongs to the globin family. In terms of assembly, heterotetramer of two alpha chains and two beta chains. Red blood cells.

Involved in oxygen transport from the lung to the various peripheral tissues. Its function is as follows. Hemopressin acts as an antagonist peptide of the cannabinoid receptor CNR1. Hemopressin-binding efficiently blocks cannabinoid receptor CNR1 and subsequent signaling. This chain is Hemoglobin subunit alpha (HBA), found in Bradypus tridactylus (Pale-throated three-toed sloth).